A 555-amino-acid polypeptide reads, in one-letter code: MTRYIFITGGVVSSLGKGITSASLGAILEAQGLTVTLLKLDPYINVDPGTMSPFQHGEVFVTEDGAETDLDLGHYERFVNATMTRKNNFTTGRVYADVIRKERRGDYLGGTIQVIPHITDEIKAKIREGADGADVALVEVGGTVGDIESLPFLEAIRQMRIELGDQQTLFIHLTLVPYVAVAGEIKTKPTQHSVKELRSIGIQPDILVCRSEQPLPDAERAKIALFTNVPEPSVISLSDVKSIYEIPLILRDQGLGNRVCEKLNIKATAADLDDWKKVVQAQKNPRHTVTVAVVGKYVDLEDSYKSLSEALIHAGIHTQTRVVIEYIDSEAIELHGTELLKKVDAILVPGGFGSRGIEGKILAAQYARENGIPYLGICLGMQIAIIEFARHKAQMENANSTEFDPKTPFPVVALVSEWMAKEGIIEKRKWGDDLGGTMRLGGQPCRLKIDSLARRLYGEDRVIERHRHRYEVNNDLIGELEKKGLVISGRSIDDRLVEMIELADHPWFVGCQFHPEFTSTPRKGHPLFIGFIKAGLAAKEAKKAVLAAPSQEKTD.

The tract at residues 1–265 (MTRYIFITGG…GNRVCEKLNI (265 aa)) is amidoligase domain. S13 is a binding site for CTP. S13 is a binding site for UTP. Residues 14–19 (SLGKGI) and D71 each bind ATP. Residues D71 and E139 each contribute to the Mg(2+) site. CTP is bound by residues 146–148 (DIE), 186–191 (KTKPTQ), and K222. UTP-binding positions include 186–191 (KTKPTQ) and K222. A Glutamine amidotransferase type-1 domain is found at 290 to 541 (TVAVVGKYVD…IKAGLAAKEA (252 aa)). G351 is an L-glutamine binding site. The active-site Nucleophile; for glutamine hydrolysis is C378. Residues 379-382 (LGMQ), E402, and R469 each bind L-glutamine. Catalysis depends on residues H514 and E516.

It belongs to the CTP synthase family. As to quaternary structure, homotetramer.

The enzyme catalyses UTP + L-glutamine + ATP + H2O = CTP + L-glutamate + ADP + phosphate + 2 H(+). The catalysed reaction is L-glutamine + H2O = L-glutamate + NH4(+). It catalyses the reaction UTP + NH4(+) + ATP = CTP + ADP + phosphate + 2 H(+). Its pathway is pyrimidine metabolism; CTP biosynthesis via de novo pathway; CTP from UDP: step 2/2. Allosterically activated by GTP, when glutamine is the substrate; GTP has no effect on the reaction when ammonia is the substrate. The allosteric effector GTP functions by stabilizing the protein conformation that binds the tetrahedral intermediate(s) formed during glutamine hydrolysis. Inhibited by the product CTP, via allosteric rather than competitive inhibition. Its function is as follows. Catalyzes the ATP-dependent amination of UTP to CTP with either L-glutamine or ammonia as the source of nitrogen. Regulates intracellular CTP levels through interactions with the four ribonucleotide triphosphates. The protein is CTP synthase of Coxiella burnetii (strain CbuK_Q154) (Coxiella burnetii (strain Q154)).